Here is a 102-residue protein sequence, read N- to C-terminus: DET1- and DDB1-associated protein 1 (102 aa).

A disordered region spans residues 67–102 (NAAKKRDQEQVEIEGENSAPPRKIARTDSQDMNEDT).

It belongs to the DDA1 family. As to quaternary structure, component of numerous DCX (DDB1-CUL4-X-box) E3 ubiquitin-protein ligase complexes which consist of a core of DDB1, cullin-4 (CUL4A or CUL4B), DDA1 and RBX1.

The protein operates within protein modification; protein ubiquitination. In terms of biological role, functions as a component of numerous distinct DCX (DDB1-CUL4-X-box) E3 ubiquitin-protein ligase complexes which mediate the ubiquitination and subsequent proteasomal degradation of target proteins. In the DCX complexes, acts as a scaffolding subunit required to stabilize the complex. This chain is DET1- and DDB1-associated protein 1, found in Gallus gallus (Chicken).